A 691-amino-acid chain; its full sequence is Solute carrier family 28 member 3 (691 aa).

The tract at residues 1–78 (MELRSTAAPR…HMEDDDEEMQ (78 aa)) is disordered. The Cytoplasmic segment spans residues 1 to 102 (MELRSTAAPR…FCRKHKTTLR (102 aa)). A compositionally biased stretch (low complexity) spans 21-30 (NEENFLENEN). The span at 31–42 (TSGNNSIRSRAV) shows a compositional bias: polar residues. Over residues 43-54 (QSREHTNTKQDE) the composition is skewed to basic and acidic residues. Residues 103-123 (HIIWGILLAGYLVMVISACVL) traverse the membrane as a helical segment. Residues 124 to 128 (NFHRA) lie on the Extracellular side of the membrane. Residues 129-149 (LPLFVITVAAIFFVVWDHLMA) form a helical membrane-spanning segment. At 150–173 (KYEHRIDEMLSPGRRLLNSHWFWL) the chain is on the cytoplasmic side. The helical transmembrane segment at 174–194 (KWVIWSSLVLAVIFWLAFDTA) threads the bilayer. Over 195-197 (KLG) the chain is Extracellular. The helical transmembrane segment at 198–219 (QQQLVSFGGLIMYIVLLFLFSK) threads the bilayer. The Cytoplasmic segment spans residues 220 to 227 (YPTRVYWR). The chain crosses the membrane as a helical span at residues 228–247 (PVLWGIGLQFLLGLLILRTD). Residues 248 to 284 (PGFIAFDWLGRQVQTFLEYTDAGASFVFGEKYKDHFF) lie on the Extracellular side of the membrane. The chain crosses the membrane as a helical span at residues 285-305 (AFKVLPIVVFFSTVMSMLYYL). The Cytoplasmic portion of the chain corresponds to 306-329 (GLMQWIIRKVGWIMLVTTGSSPIE). The segment at residues 330 to 348 (SVVASGNIFVGQTESPLLV) is an intramembrane region (helical). Topologically, residues 349–361 (RPYLPYITKSELH) are cytoplasmic. The chain crosses the membrane as a helical span at residues 362–384 (AIMTAGFSTIAGSVLGAYISFGV). At 385-386 (PS) the chain is on the extracellular side. Residues 387–408 (SHLLTASVMSAPASLAAAKLFW) traverse the membrane as a helical segment. Over 409 to 443 (PETEKPKITLKNAMKMESGDSGNLLEAATQGASSS) the chain is Cytoplasmic. The chain crosses the membrane as a helical span at residues 444–469 (ISLVANIAVNLIAFLALLSFMNSALS). The Extracellular portion of the chain corresponds to 470–507 (WFGNMFDYPQLSFELICSYIFMPFSFMMGVEWQDSFMV). The helical intramembrane region spans 508–527 (ARLIGYKTFFNEFVAYEHLS). Residues 528–566 (KWIHLRKEGGPKFVNGVQQYISIRSEIIATYALCGFANI) are Extracellular-facing. Residues 567-577 (GSLGIVIGGLT) form a helical membrane-spanning segment. Residues 578 to 590 (SMAPSRKRDIASG) are Cytoplasmic-facing. A helical membrane pass occupies residues 591–613 (AVRALIAGTVACFMTACIAGILS). Residues 614-691 (STPVDINCHH…FNCNGISNTF (78 aa)) are Extracellular-facing.

This sequence belongs to the concentrative nucleoside transporter (CNT) (TC 2.A.41) family. Homotrimer. Expressed in pancreas, bone marrow, trachea, mammary gland, liver, prostate, and regions of intestine, brain, lung, placenta, testis, kidney, and heart.

The protein resides in the cell membrane. The protein localises to the endoplasmic reticulum membrane. It catalyses the reaction thymidine(out) + 2 Na(+)(out) = thymidine(in) + 2 Na(+)(in). The catalysed reaction is cytidine(out) + 2 Na(+)(out) = cytidine(in) + 2 Na(+)(in). It carries out the reaction uridine(out) + 2 Na(+)(out) = uridine(in) + 2 Na(+)(in). The enzyme catalyses adenosine(out) + 2 Na(+)(out) = adenosine(in) + 2 Na(+)(in). It catalyses the reaction guanosine(out) + 2 Na(+)(out) = guanosine(in) + 2 Na(+)(in). The catalysed reaction is inosine(out) + 2 Na(+)(out) = inosine(in) + 2 Na(+)(in). Functionally, sodium-dependent, pyrimidine- and purine-selective. Involved in the homeostasis of endogenous nucleosides. Exhibits the transport characteristics of the nucleoside transport system cib or N3 subtype (N3/cib) (with marked transport of both thymidine and inosine). Employs a 2:1 sodium/nucleoside ratio. Transports uridine. Also able to transport gemcitabine, 3'-azido-3'-deoxythymidine (AZT), ribavirin and 3-deazauridine. This chain is Solute carrier family 28 member 3 (SLC28A3), found in Homo sapiens (Human).